Reading from the N-terminus, the 660-residue chain is Glycogen debranching enzyme (660 aa).

The Nucleophile role is filled by D338. E373 functions as the Proton donor in the catalytic mechanism. The segment covering N460–W472 has biased composition (basic and acidic residues). Positions N460–E482 are disordered.

The protein belongs to the glycosyl hydrolase 13 family.

The enzyme catalyses Hydrolysis of (1-&gt;6)-alpha-D-glucosidic linkages to branches with degrees of polymerization of three or four glucose residues in limit dextrin.. It participates in glycan degradation; glycogen degradation. Removes maltotriose and maltotetraose chains that are attached by 1,6-alpha-linkage to the limit dextrin main chain, generating a debranched limit dextrin. The chain is Glycogen debranching enzyme from Cronobacter sakazakii (strain ATCC BAA-894) (Enterobacter sakazakii).